The chain runs to 79 residues: Acyl carrier protein (79 aa).

A Carrier domain is found at 2-77 (SEIGERVKKI…DATKFLEKNA (76 aa)). Ser37 is modified (O-(pantetheine 4'-phosphoryl)serine).

It belongs to the acyl carrier protein (ACP) family. In terms of processing, 4'-phosphopantetheine is transferred from CoA to a specific serine of apo-ACP by AcpS. This modification is essential for activity because fatty acids are bound in thioester linkage to the sulfhydryl of the prosthetic group.

It is found in the cytoplasm. It functions in the pathway lipid metabolism; fatty acid biosynthesis. Its function is as follows. Carrier of the growing fatty acid chain in fatty acid biosynthesis. The sequence is that of Acyl carrier protein from Rhodopseudomonas palustris (strain HaA2).